Here is a 761-residue protein sequence, read N- to C-terminus: ARF GTPase-activating protein GIT1 (761 aa).

The 124-residue stretch at 1-124 folds into the Arf-GAP domain; it reads MSRKGPRAEV…AFVHKLPCRD (124 aa). The interaction with gamma-tubulin and localization to the centrosome stretch occupies residues 1–124; that stretch reads MSRKGPRAEV…AFVHKLPCRD (124 aa). Residues 11–34 form a C4-type zinc finger; it reads CADCSAPDPGWASISRGVLVCDEC. ANK repeat units lie at residues 132 to 161, 166 to 195, and 199 to 228; these read DLSK…QANF, KGTT…DPGS, and NGRT…ELTD. A Phosphotyrosine modification is found at Tyr224. An interaction with PCLO region spans residues 245-365; it reads HYIIPQMADS…QGKSLSSPTD (121 aa). The segment at 253-415 is interaction with PTK2/FAK1; that stretch reads DSLDLSELAK…NRARSMDSSD (163 aa). The tract at residues 254-367 is interaction with ARHGEF7; sequence SLDLSELAKA…KSLSSPTDNL (114 aa). A disordered region spans residues 354 to 416; sequence RQQGKSLSSP…RARSMDSSDL (63 aa). Over residues 357 to 374 the composition is skewed to polar residues; that stretch reads GKSLSSPTDNLELSLRSQ. Phosphoserine occurs at positions 359 and 362. Thr364 is modified (phosphothreonine). An interaction with NCK2 and GRIN3A region spans residues 366-587; it reads NLELSLRSQS…QEGSRHTSKL (222 aa). A required for localization at synapses region spans residues 366–587; it reads NLELSLRSQS…QEGSRHTSKL (222 aa). Phosphoserine occurs at positions 370 and 375. The residue at position 383 (Tyr383) is a Phosphotyrosine. Residues Ser385 and Ser388 each carry the phosphoserine modification. Acidic residues predominate over residues 385 to 394; sequence SVASDEDTDQ. Thr392 is modified (phosphothreonine). 3 positions are modified to phosphoserine: Ser410, Ser413, and Ser417. The interaction with MAPK1 stretch occupies residues 411–466; sequence MDSSDLSDGAVTLQEYLELKKALATSEAKVQQLMKVNSSLSDELRRLQREIHKLQA. The interaction with IKBKG stretch occupies residues 420 to 620; sequence AVTLQEYLEL…EGKRFLELGK (201 aa). A coiled-coil region spans residues 440 to 474; sequence VQQLMKVNSSLSDELRRLQREIHKLQAENLQLRQP. Residues 471–501 are disordered; sequence LRQPPGPVPTPPLPSERAEHTPMAPGGSTHR. Residues 474 to 484 are compositionally biased toward pro residues; it reads PPGPVPTPPLP. Thr480 bears the Phosphothreonine mark. Phosphoserine is present on residues Ser498 and Ser536. Phosphothreonine is present on Thr537. Residues Tyr545 and Tyr554 each carry the phosphotyrosine modification. A phosphoserine mark is found at Ser561, Ser571, Ser592, and Ser596. The disordered stretch occupies residues 572 to 606; the sequence is PLLSCSQEGSRHTSKLSRHGSGADSDYENTQSGDP. Thr601 is modified (phosphothreonine). At Ser630 the chain carries Phosphoserine. The tract at residues 637-761 is interaction with PXN and TGFB1I1; that stretch reads PGLPSTEDVI…VTITTREKKQ (125 aa).

In terms of assembly, forms homodimers and possibly oligomers. May forms heterooligomers with GIT2. Interacts with G protein-coupled receptor kinases, including GRK2, GRK3, GRK5 and GRK6. Interacts with PPFIA1, PPFIA2 and PPFIA4. Interacts with GRIP1 and forms a ternary complex with PPFIA1 and GRIP1. Directly interacts with ARHGEF7/beta-PIX, forming in vitro a heptameric complex made of a GIT1 dimer and an ARHGEF7 trimer. Directly interacts with PXN/paxillin; this interaction is enhanced in the presence of ARHGEF7. Directly interacts (via C-terminus) with TGFB1I1/Hic-5 (via LD motif 3). Directly interacts with PTK2/FAK1. May interact with PTK2B/PYK2; this interaction may be indirect. Interacts with AMPA receptors GRIA2/3. Directly interacts with protein Piccolo/PCLO. Forms a complex with Ephrin-B1/EFNB1 and NCK2/GRB4 (via SH2); this interaction is important for spine morphogenesis and synapse formation. Interaction with NCK2 is transient and depends upon GIT1 phosphorylation at Tyr-383. Interacts with GRIN3A/GluN3A (via C-terminus); this interaction competes with GIT1 interaction with ARHGEF7 and limits synaptic localization of GIT1. Interacts with IKBKG/NEMO in resting bone mesenchymal stem cells, as well as in TNF-stimulated cells; this interaction may increase IKBKG affinity for 'Lys-63'-linked polyubiquitin chains. Interacts with GABA(A) receptors, including GABRB3 and GABRG2. Interacts with SCRIB. Interacts (via N- and C-terminus) with ENTR1/SDCCAG3 (via N-terminus); this interaction is direct. May form a tripartite complex with ENTR1 and PTPN13. Interacts with YWHAZ. Interacts with PAK1. Interacts with PAK3. Directly interacts (via N-terminus) with gamma-tubulin. Interacts with MAPK1 and MAPK3; this interaction is required for MAPK1/3 recruitment to focal adhesions. In terms of processing, phosphorylated by PAK1. Phosphorylation on tyrosine residues may be catalyzed by PTK2/FAK1 and SRC in growing fibroblasts. Phosphorylation at Tyr-383 is induced by activation of Ephrin-B1/EFNB1 and catalyzed by SRC family kinases. It is required for the interaction with NCK2 and for GIT1 recruitment to synapses in hippocampal neurons.

Its subcellular location is the cytoplasm. It is found in the synapse. The protein localises to the presynapse. It localises to the postsynapse. The protein resides in the postsynaptic density. Its subcellular location is the cell junction. It is found in the focal adhesion. The protein localises to the cell projection. It localises to the lamellipodium. The protein resides in the cytoskeleton. Its subcellular location is the microtubule organizing center. It is found in the centrosome. The protein localises to the spindle pole. GTPase-activating protein for ADP ribosylation factor family members, including ARF1. Multidomain scaffold protein that interacts with numerous proteins and therefore participates in many cellular functions, including receptor internalization, focal adhesion remodeling, and signaling by both G protein-coupled receptors and tyrosine kinase receptors. Through PAK1 activation, positively regulates microtubule nucleation during interphase. Plays a role in the regulation of cytokinesis; for this function, may act in a pathway also involving ENTR1 and PTPN13. May promote cell motility both by regulating focal complex dynamics and by local activation of RAC1. May act as scaffold for MAPK1/3 signal transduction in focal adhesions. Recruits MAPK1/3/ERK1/2 to focal adhesions after EGF stimulation via a Src-dependent pathway, hence stimulating cell migration. Plays a role in brain development and function. Involved in the regulation of spine density and synaptic plasticity that is required for processes involved in learning. Plays an important role in dendritic spine morphogenesis and synapse formation. In hippocampal neurons, recruits guanine nucleotide exchange factors (GEFs), such as ARHGEF7/beta-PIX, to the synaptic membrane. These in turn locally activate RAC1, which is an essential step for spine morphogenesis and synapse formation. May contribute to the organization of presynaptic active zones through oligomerization and formation of a Piccolo/PCLO-based protein network, which includes ARHGEF7/beta-PIX and FAK1. In neurons, through its interaction with liprin-alpha family members, may be required for AMPA receptor (GRIA2/3) proper targeting to the cell membrane. In complex with GABA(A) receptors and ARHGEF7, plays a crucial role in regulating GABA(A) receptor synaptic stability, maintaining GPHN/gephyrin scaffolds and hence GABAergic inhibitory synaptic transmission, by locally coordinating RAC1 and PAK1 downstream effector activity, leading to F-actin stabilization. May also be important for RAC1 downstream signaling pathway through PAK3 and regulation of neuronal inhibitory transmission at presynaptic input. Required for successful bone regeneration during fracture healing. The function in intramembranous ossification may, at least partly, exerted by macrophages in which GIT1 is a key negative regulator of redox homeostasis, IL1B production, and glycolysis, acting through the ERK1/2/NRF2/NFE2L2 axis. May play a role in angiogenesis during fracture healing. In this process, may regulate activation of the canonical NF-kappa-B signal in bone mesenchymal stem cells by enhancing the interaction between NEMO and 'Lys-63'-ubiquitinated RIPK1/RIP1, eventually leading to enhanced production of VEGFA and others angiogenic factors. Essential for VEGF signaling through the activation of phospholipase C-gamma and ERK1/2, hence may control endothelial cell proliferation and angiogenesis. The sequence is that of ARF GTPase-activating protein GIT1 (GIT1) from Homo sapiens (Human).